Consider the following 504-residue polypeptide: Ribose import ATP-binding protein RbsA 3 (504 aa).

2 consecutive ABC transporter domains span residues 6-238 (ANLK…VGRP) and 251-494 (IGAE…MMGG). An ATP-binding site is contributed by 38–45 (GENGAGKS).

Belongs to the ABC transporter superfamily. Ribose importer (TC 3.A.1.2.1) family. In terms of assembly, the complex is composed of an ATP-binding protein (RbsA), two transmembrane proteins (RbsC) and a solute-binding protein (RbsB).

The protein resides in the cell inner membrane. The catalysed reaction is D-ribose(out) + ATP + H2O = D-ribose(in) + ADP + phosphate + H(+). Its function is as follows. Part of the ABC transporter complex RbsABC involved in ribose import. Responsible for energy coupling to the transport system. The polypeptide is Ribose import ATP-binding protein RbsA 3 (Rhizobium meliloti (strain 1021) (Ensifer meliloti)).